A 601-amino-acid polypeptide reads, in one-letter code: Translation initiation factor IF-2 (601 aa).

A disordered region spans residues Gly-54–Glu-101. Residues Ala-57 to Thr-89 show a composition bias toward low complexity. The tr-type G domain occupies His-104–Arg-273. The G1 stretch occupies residues Gly-113–Thr-120. Position 113 to 120 (Gly-113 to Thr-120) interacts with GTP. The interval Gly-138 to His-142 is G2. Residues Asp-159–Gly-162 are G3. GTP is bound by residues Asp-159–His-163 and Asn-213–Asp-216. The G4 stretch occupies residues Asn-213–Asp-216. The G5 stretch occupies residues Ser-249 to Lys-251.

The protein belongs to the TRAFAC class translation factor GTPase superfamily. Classic translation factor GTPase family. IF-2 subfamily.

It is found in the cytoplasm. Functionally, one of the essential components for the initiation of protein synthesis. Protects formylmethionyl-tRNA from spontaneous hydrolysis and promotes its binding to the 30S ribosomal subunits. Also involved in the hydrolysis of GTP during the formation of the 70S ribosomal complex. The polypeptide is Translation initiation factor IF-2 (Deinococcus geothermalis (strain DSM 11300 / CIP 105573 / AG-3a)).